Consider the following 61-residue polypeptide: DGYIRGGDGCKVSCVIDHVFCDNECKAAGGSYGYCWGWGLACWCEGLPADREWKYETNTCG.

The LCN-type CS-alpha/beta domain occupies 1 to 61; that stretch reads DGYIRGGDGC…EWKYETNTCG (61 aa). 4 disulfides stabilise this stretch: C10–C60, C14–C35, C21–C42, and C25–C44.

This sequence belongs to the long (4 C-C) scorpion toxin superfamily. Sodium channel inhibitor family. Beta subfamily. Expressed by the venom gland.

It is found in the secreted. Functionally, excitatory insect beta-toxins induce a spastic paralysis. They bind voltage-independently at site-4 of sodium channels (Nav) and shift the voltage of activation toward more negative potentials thereby affecting sodium channel activation and promoting spontaneous and repetitive firing. This toxin is active only on insects. It operates by inducing a fast contraction paralysis without depressant activity. It is more similar to the excitatory toxins in its mode of action and the depressant toxins in its primary structure. In Leiurus hebraeus (Hebrew deathstalker scorpion), this protein is Insect toxin LqhIT5.